Reading from the N-terminus, the 382-residue chain is Mannitol-1-phosphate 5-dehydrogenase (382 aa).

Residue 3-14 participates in NAD(+) binding; the sequence is ALHFGAGNIGRG.

This sequence belongs to the mannitol dehydrogenase family.

The enzyme catalyses D-mannitol 1-phosphate + NAD(+) = beta-D-fructose 6-phosphate + NADH + H(+). This is Mannitol-1-phosphate 5-dehydrogenase from Klebsiella pneumoniae (strain 342).